Here is a 1201-residue protein sequence, read N- to C-terminus: MLDVNNFEYMKIGLASPDKIRSWSHGEVKKPETINYRTLKPERDGLFCERIFGPMKDWECSCGKYKRVRYKGVVCDRCGVEVTKSKVRRERMGHIELAAPVSHIWYFKGIPSRMGLVMDMSPRALEEIIYFASYVVTEPGDTPLEKKQLLSEREYRVYREKYGKGFSAGMGAEAIKKILADIDLEKETNDLKEELKSAQGQRRTRAIRRLEVMEAFRNSGNNPSWMVLDVLPVIPPEIRPMVQLEGGRFATSDLNDLYRRVINRNNRLKRLLDLGAPNIIVQNEKRMLQEAVDALIDNGRRGRPVTGPGNRPLKSLSHMLKGKQGRFRQNLLGKRVDYSGRSVIVVGPNLKMYQCGLPKEMALELFKPFVMKELVGRGLAHNIKSAKRKIERMAPEIWDVLEEVIREHPVLLNRAPTLHRLGIQAFEPTLVEGRAIRLHPLVCTAYNADFDGDQMAVHVPLSAEAQAEARILMLAAQNILNPKDGKPVVTPSQDMVLGNYYLTLEREKAVGEGTIFKDINEAQLAYQNGYVHLHSRIAVFAGSIPNERFTDEQRNQLLITTVGKLIFNTILPKSFPYINEPTKFNLEIETPAKYFVDTTTDVRAHIAAQELIDPFKKKILGNIIAEVFKKFHITETSKMLDRMKDLGFKISTKAGMTVGIADILTLEEKHEILEKAHDTVEKITKSFRRGLITDDERYERVIAVWNAAKDEIQGKLILSLDRLNPIFMMQDSGARGNISNFTQLAGMRGLMADPSGRIVELPITSNFREGLTVLEYFISTHGARKGLTDTALKTADSGYLTRRLVDVAQDVIIREDDCGTDRGLTIKAIREGTEIIEPLEERLEGRYSRKTIRHPETKEVIARENDLITEAIATQIVDAGIEEVTIRSAFTCNTKHGVCKKCYGKNLATGTEVEVGEAVGIIAAQSIGEPGTQLTMRTFHTGGVAGDDITQGLPRIQEIFEARNPKGQAIITEVGGEVVSIEEGRDRQQEITIQGTDDRRSYNIPYTARLRVEEGTIVERGEALTEGSVDPKALIRVRDVLSVQEYLLAEVQKVYRMQGVEIGDKHVEVMVRQMLRKIRVMDTGDTNILPGTLMDIHTFTEANREAILSGSQPATGRPVLLGITKASLETDSFLSAASFQETTRVLTDAAIKGKRDELLGLKENVILGKLVPAGTGIGRYRKLKSEVIKETAEVTDEITNI.

Residues cysteine 60, cysteine 62, cysteine 75, and cysteine 78 each coordinate Zn(2+). 3 residues coordinate Mg(2+): aspartate 449, aspartate 451, and aspartate 453. Zn(2+)-binding residues include cysteine 818, cysteine 892, cysteine 899, and cysteine 902.

The protein belongs to the RNA polymerase beta' chain family. The RNAP catalytic core consists of 2 alpha, 1 beta, 1 beta' and 1 omega subunit. When a sigma factor is associated with the core the holoenzyme is formed, which can initiate transcription. Mg(2+) serves as cofactor. Requires Zn(2+) as cofactor.

The enzyme catalyses RNA(n) + a ribonucleoside 5'-triphosphate = RNA(n+1) + diphosphate. In terms of biological role, DNA-dependent RNA polymerase catalyzes the transcription of DNA into RNA using the four ribonucleoside triphosphates as substrates. This chain is DNA-directed RNA polymerase subunit beta', found in Listeria monocytogenes serovar 1/2a (strain ATCC BAA-679 / EGD-e).